The primary structure comprises 360 residues: Phenylalanine--tRNA ligase alpha subunit (360 aa).

Glu-260 is a binding site for Mg(2+).

This sequence belongs to the class-II aminoacyl-tRNA synthetase family. Phe-tRNA synthetase alpha subunit type 1 subfamily. Tetramer of two alpha and two beta subunits. Mg(2+) is required as a cofactor.

The protein localises to the cytoplasm. It catalyses the reaction tRNA(Phe) + L-phenylalanine + ATP = L-phenylalanyl-tRNA(Phe) + AMP + diphosphate + H(+). The sequence is that of Phenylalanine--tRNA ligase alpha subunit from Rhizobium rhizogenes (strain K84 / ATCC BAA-868) (Agrobacterium radiobacter).